The following is a 267-amino-acid chain: uncharacterized protein (267 aa).

To S.pombe SpAC18G6.12c.

This is an uncharacterized protein from Schizosaccharomyces pombe (strain 972 / ATCC 24843) (Fission yeast).